The following is a 105-amino-acid chain: Blood plasma apolipoprotein LAL1 (105 aa).

Residues 1–21 (MKLHVAALATLAVVCILAAGS) form the signal peptide. Positions 22–29 (EAAPKAMS) are excised as a propeptide.

As to expression, plasma.

It is found in the secreted. This Petromyzon marinus (Sea lamprey) protein is Blood plasma apolipoprotein LAL1.